Here is a 702-residue protein sequence, read N- to C-terminus: Polyphosphate kinase (702 aa).

N55 provides a ligand contact to ATP. Mg(2+)-binding residues include R389 and R419. H449 functions as the Phosphohistidine intermediate in the catalytic mechanism. Positions 482, 578, and 606 each coordinate ATP.

This sequence belongs to the polyphosphate kinase 1 (PPK1) family. Requires Mg(2+) as cofactor. An intermediate of this reaction is the autophosphorylated ppk in which a phosphate is covalently linked to a histidine residue through a N-P bond.

The enzyme catalyses [phosphate](n) + ATP = [phosphate](n+1) + ADP. Catalyzes the reversible transfer of the terminal phosphate of ATP to form a long-chain polyphosphate (polyP). This is Polyphosphate kinase from Bacillus anthracis.